The sequence spans 693 residues: CREB-regulated transcription coactivator 2 (693 aa).

Polar residues predominate over residues 1–20; the sequence is MATSGANGPGSATASASNPR. Positions 1 to 30 are disordered; it reads MATSGANGPGSATASASNPRKFSEKIALQK. Ala-2 is subject to N-acetylalanine. Arg-51 bears the Asymmetric dimethylarginine; by PRMT6 mark. Residues Ser-70, Ser-86, and Ser-90 each carry the phosphoserine modification. Asymmetric dimethylarginine; by PRMT6 occurs at positions 99, 120, and 123. Phosphoserine is present on Ser-136. Arg-161 and Arg-168 each carry asymmetric dimethylarginine; by PRMT6. Thr-169 is modified (phosphothreonine). Ser-171 carries the post-translational modification Phosphoserine. Residues 174-188 are compositionally biased toward polar residues; the sequence is ALHTSVMNPSPQDTY. Residues 174–210 form a disordered region; the sequence is ALHTSVMNPSPQDTYPSPAAPSVLPSRRGGCLDGETD. Residues 209–215 are required for interaction with COP1; it reads TDSKVPA. Lys-234 is covalently cross-linked (Glycyl lysine isopeptide (Lys-Gly) (interchain with G-Cter in SUMO2)). Positions 271-287 match the Nuclear export signal motif; it reads TGGSLPDLTNLHFPPPL. Disordered stretches follow at residues 271-307, 335-463, and 476-548; these read TGGS…GSST, HSPL…SPTL, and KLPT…QSYH. Phosphoserine; by MARK2 is present on Ser-274. The residue at position 306 (Ser-306) is a Phosphoserine. A compositionally biased stretch (polar residues) spans 339–351; the sequence is SHPSFQSSLSNPN. 2 stretches are compositionally biased toward low complexity: residues 352–378 and 386–424; these read LQAS…SSLA and SLGH…PGAS. Ser-368, Ser-393, Ser-433, and Ser-456 each carry phosphoserine. The segment covering 447-463 has biased composition (polar residues); that stretch reads SQQQLPKQFSPTMSPTL. The residue at position 488 (Tyr-488) is a Phosphotyrosine. Residues Ser-489 and Ser-492 each carry the phosphoserine modification. Thr-501 carries the phosphothreonine modification. A phosphoserine mark is found at Ser-613 and Ser-624.

This sequence belongs to the TORC family. Binds, as a tetramer, through its N-terminal region, with the bZIP domain of CREB1. 'Arg-314' in the bZIP domain of CREB1 is essential for this interaction. Interaction, via its C-terminal, with TAF4, enhances recruitment of TAF4 to CREB1. Interacts with SIK2. Interacts with 14-3-3 proteins, YWHAB and YWHAG. Interacts (probably when phosphorylated at Ser-171) with YWHAE. Interacts with calmodulin-dependent catalytic subunit PPP3CA/calcineurin A. Interaction with COP1 mediates nuclear export and degradation of CRTC2. Post-translationally, phosphorylation/dephosphorylation states of Ser-171 are required for regulating transduction of CREB activity. CRTCs/TORCs are inactive when phosphorylated, and active when dephosphorylated at this site. This primary site of phosphorylation, is regulated by cAMP and calcium levels and is dependent on the phosphorylation of SIKs (SIK1 and SIK2) by LKB1. Following adenylyl cyclase activation, dephosphorylated at Ser-171 by PPP3CA/calcineurin A resulting in CRTC2 dissociation from 14-3-3 proteins and PPP3CA. Both insulin and AMPK increase this phosphorylation of CRTC2 while glucagon suppresses it. Phosphorylation at Ser-274 by MARK2 is induced under low glucose conditions and dephosphorylated in response to glucose influx. Phosphorylation at Ser-274 promotes interaction with 14-3-3 proteins and translocation to the cytoplasm. Asymmetric dimethylation of arginine resisues by PRMT6 enhances the association of CRTC2 with CREB on the promoters of gluconeogenic genes.

It is found in the cytoplasm. The protein localises to the nucleus. Transcriptional coactivator for CREB1 which activates transcription through both consensus and variant cAMP response element (CRE) sites. Acts as a coactivator, in the SIK/TORC signaling pathway, being active when dephosphorylated and acts independently of CREB1 'Ser-133' phosphorylation. Enhances the interaction of CREB1 with TAF4. Regulates gluconeogenesis as a component of the LKB1/AMPK/TORC2 signaling pathway. Regulates the expression of specific genes such as the steroidogenic gene, StAR. Potent coactivator of PPARGC1A and inducer of mitochondrial biogenesis in muscle cells. The protein is CREB-regulated transcription coactivator 2 (CRTC2) of Bos taurus (Bovine).